The following is a 339-amino-acid chain: DNA-directed RNA polymerase subunit alpha (339 aa).

Residues 1–235 are alpha N-terminal domain (alpha-NTD); the sequence is MVIQRNWQSL…DQLQLFINFE (235 aa). Residues 251 to 339 form an alpha C-terminal domain (alpha-CTD) region; the sequence is FNRNLLRKVD…DLAKRLEEPF (89 aa).

Belongs to the RNA polymerase alpha chain family. As to quaternary structure, homodimer. The RNAP catalytic core consists of 2 alpha, 1 beta, 1 beta' and 1 omega subunit. When a sigma factor is associated with the core the holoenzyme is formed, which can initiate transcription.

The enzyme catalyses RNA(n) + a ribonucleoside 5'-triphosphate = RNA(n+1) + diphosphate. In terms of biological role, DNA-dependent RNA polymerase catalyzes the transcription of DNA into RNA using the four ribonucleoside triphosphates as substrates. The polypeptide is DNA-directed RNA polymerase subunit alpha (Granulibacter bethesdensis (strain ATCC BAA-1260 / CGDNIH1)).